Reading from the N-terminus, the 140-residue chain is Heavy metal-associated isoprenylated plant protein 31 (140 aa).

The HMA domain occupies 3–67 (MTVEIRVPNL…AVRRAGKAAE (65 aa)). A metal cation-binding residues include C14 and C17. Position 137 is a cysteine methyl ester (C137). Residue C137 is the site of S-farnesyl cysteine attachment. Residues 138 to 140 (TIM) constitute a propeptide, removed in mature form.

Belongs to the HIPP family.

Its function is as follows. Heavy-metal-binding protein. This is Heavy metal-associated isoprenylated plant protein 31 from Arabidopsis thaliana (Mouse-ear cress).